The chain runs to 204 residues: Peptide deformylase (204 aa).

Positions 131 and 174 each coordinate Fe cation. Glu175 is an active-site residue. A Fe cation-binding site is contributed by His178.

The protein belongs to the polypeptide deformylase family. Fe(2+) serves as cofactor.

It carries out the reaction N-terminal N-formyl-L-methionyl-[peptide] + H2O = N-terminal L-methionyl-[peptide] + formate. Its function is as follows. Removes the formyl group from the N-terminal Met of newly synthesized proteins. Requires at least a dipeptide for an efficient rate of reaction. N-terminal L-methionine is a prerequisite for activity but the enzyme has broad specificity at other positions. The chain is Peptide deformylase from Streptococcus equi subsp. zooepidemicus (strain MGCS10565).